We begin with the raw amino-acid sequence, 430 residues long: Tol-Pal system protein TolB (430 aa).

The signal sequence occupies residues 1–21 (MKQAFRVALGFLVLWASVLHA).

Belongs to the TolB family. The Tol-Pal system is composed of five core proteins: the inner membrane proteins TolA, TolQ and TolR, the periplasmic protein TolB and the outer membrane protein Pal. They form a network linking the inner and outer membranes and the peptidoglycan layer.

The protein localises to the periplasm. In terms of biological role, part of the Tol-Pal system, which plays a role in outer membrane invagination during cell division and is important for maintaining outer membrane integrity. TolB occupies a key intermediary position in the Tol-Pal system because it communicates directly with both membrane-embedded components, Pal in the outer membrane and TolA in the inner membrane. This chain is Tol-Pal system protein TolB, found in Yersinia enterocolitica serotype O:8 / biotype 1B (strain NCTC 13174 / 8081).